Consider the following 368-residue polypeptide: Phosphate acyltransferase (368 aa).

A disordered region spans residues 337-368 (LGDGEHDAGGAGQASPAAGHHAEPSAAQSSKA).

It belongs to the PlsX family. In terms of assembly, homodimer. Probably interacts with PlsY.

It is found in the cytoplasm. The enzyme catalyses a fatty acyl-[ACP] + phosphate = an acyl phosphate + holo-[ACP]. It functions in the pathway lipid metabolism; phospholipid metabolism. Its function is as follows. Catalyzes the reversible formation of acyl-phosphate (acyl-PO(4)) from acyl-[acyl-carrier-protein] (acyl-ACP). This enzyme utilizes acyl-ACP as fatty acyl donor, but not acyl-CoA. The sequence is that of Phosphate acyltransferase from Burkholderia orbicola (strain MC0-3).